The following is a 185-amino-acid chain: MVRLISFLTLASTFAYAGEGHLGHSPGALIWKGLNILAFLGIVYYFGKKPISEAFNKFYNSIVESLVNAEREFMMAREELSKAKEELENAKKKAQEYEKLAIETAETEKKKILQHAQEVSERIKEKAKETIEIELNKAKKELALYGIQKAEEIAKDLLQKEFKKSKVQEKYIEAQLKLLEERKNA.

Residues 27-47 form a helical membrane-spanning segment; the sequence is GALIWKGLNILAFLGIVYYFG.

It belongs to the ATPase B chain family. In terms of assembly, F-type ATPases have 2 components, F(1) - the catalytic core - and F(0) - the membrane proton channel. F(1) has five subunits: alpha(3), beta(3), gamma(1), delta(1), epsilon(1). F(0) has three main subunits: a(1), b(2) and c(10-14). The alpha and beta chains form an alternating ring which encloses part of the gamma chain. F(1) is attached to F(0) by a central stalk formed by the gamma and epsilon chains, while a peripheral stalk is formed by the delta and b chains.

It is found in the cell inner membrane. In terms of biological role, f(1)F(0) ATP synthase produces ATP from ADP in the presence of a proton or sodium gradient. F-type ATPases consist of two structural domains, F(1) containing the extramembraneous catalytic core and F(0) containing the membrane proton channel, linked together by a central stalk and a peripheral stalk. During catalysis, ATP synthesis in the catalytic domain of F(1) is coupled via a rotary mechanism of the central stalk subunits to proton translocation. Component of the F(0) channel, it forms part of the peripheral stalk, linking F(1) to F(0). In Aquifex aeolicus (strain VF5), this protein is ATP synthase subunit b.